Reading from the N-terminus, the 110-residue chain is Large ribosomal subunit protein uL22 (110 aa).

The protein belongs to the universal ribosomal protein uL22 family. As to quaternary structure, part of the 50S ribosomal subunit.

Functionally, this protein binds specifically to 23S rRNA; its binding is stimulated by other ribosomal proteins, e.g. L4, L17, and L20. It is important during the early stages of 50S assembly. It makes multiple contacts with different domains of the 23S rRNA in the assembled 50S subunit and ribosome. Its function is as follows. The globular domain of the protein is located near the polypeptide exit tunnel on the outside of the subunit, while an extended beta-hairpin is found that lines the wall of the exit tunnel in the center of the 70S ribosome. In Halorhodospira halophila (strain DSM 244 / SL1) (Ectothiorhodospira halophila (strain DSM 244 / SL1)), this protein is Large ribosomal subunit protein uL22.